Here is a 519-residue protein sequence, read N- to C-terminus: Glycerophosphoinositol permease 1 (519 aa).

Residues 1-32 (MSDLVKSSEVIETTEVPPHNNNNNKRHFKYDS) are disordered. Residues 39 to 59 (LAGGVKLKDALMILCAGFALI) form a helical membrane-spanning segment. Asn93 is a glycosylation site (N-linked (GlcNAc...) asparagine). 3 helical membrane-spanning segments follow: residues 94–114 (ASLV…DYIG), 117–137 (WSIV…AASH), and 141–161 (VNGM…GIGA). N-linked (GlcNAc...) asparagine glycosylation occurs at Asn175. Helical transmembrane passes span 186-206 (ILAT…IFLI), 216-236 (DAIW…VFYF), 273-293 (VAWF…AGII), 313-333 (LLLG…VDIL), 337-357 (YTMM…GCGY), 363-383 (ITGL…FGPG), 404-424 (GISA…FSPI), and 432-452 (WTFI…FIFI). The span at 487–500 (EEEDLEGSSEDSSD) shows a compositional bias: acidic residues. The interval 487 to 519 (EEEDLEGSSEDSSDGEIVKNNTKNDVEKVDALK) is disordered. A glycan (N-linked (GlcNAc...) asparagine) is linked at Asn506. Residues 508 to 519 (TKNDVEKVDALK) show a composition bias toward basic and acidic residues.

The protein belongs to the major facilitator superfamily. Sugar transporter (TC 2.A.1.1) family.

It localises to the cell membrane. It catalyses the reaction sn-glycero-3-phospho-1D-myo-inositol(out) = sn-glycero-3-phospho-1D-myo-inositol(in). Glycerophosphodiester transporter that mediates uptake of glycerophosphoinositol (GroPIns) as a source of inositol and phosphate. Does not possess detectable glycerophosphocholine (GroPCho) transport activity. Although no glycerophosphoinositol transport activity occurs in the absence of GIT1, C.albicans is still able to use glycerophosphoinositol as a phosphate source at pH 7.5, albeit slowly. Thus, a second, GIT1-independent, mechanism must exist for utilizing glycerophosphoinositol as a phosphate source at physiological pH. The expanded ability to utilize GroPIns and GroPCho results from the organism's pathogenic nature and its need to occupy a variety of environments within its host organism. This possibility is buttressed by the fact that GroPIns and GroPCho are present and abundant in human fluids. The chain is Glycerophosphoinositol permease 1 from Candida albicans (strain SC5314 / ATCC MYA-2876) (Yeast).